The primary structure comprises 619 residues: Coagulation factor X-activating enzyme heavy chain (619 aa).

A signal peptide spans methionine 1–serine 20. Positions isoleucine 21–glutamine 188 are excised as a propeptide. The region spanning isoleucine 199–proline 393 is the Peptidase M12B domain. Cysteine 215 and cysteine 251 are disulfide-bonded. Residues asparagine 216 and asparagine 257 are each glycosylated (N-linked (GlcNAc...) (complex) asparagine). Disulfide bonds link cysteine 308–cysteine 388, cysteine 348–cysteine 372, and cysteine 350–cysteine 355. Histidine 333 contacts Zn(2+). Residue glutamate 334 is part of the active site. Zn(2+) contacts are provided by histidine 337 and histidine 343. N-linked (GlcNAc...) (complex) asparagine glycans are attached at residues asparagine 351 and asparagine 371. The Disintegrin domain maps to proline 401 to asparagine 487. Valine 403, asparagine 406, isoleucine 408, glutamate 410, glutamate 413, and aspartate 416 together coordinate Ca(2+). 14 disulfides stabilise this stretch: cysteine 404-cysteine 433, cysteine 415-cysteine 428, cysteine 417-cysteine 423, cysteine 427-cysteine 450, cysteine 441-cysteine 447, cysteine 446-cysteine 472, cysteine 459-cysteine 479, cysteine 466-cysteine 498, cysteine 491-cysteine 503, cysteine 510-cysteine 560, cysteine 525-cysteine 571, cysteine 538-cysteine 548, cysteine 555-cysteine 597, and cysteine 591-cysteine 603. Residues glutamate 465–aspartate 467 carry the D/ECD-tripeptide motif. Residues aspartate 467, valine 468, glutamate 470, aspartate 482, and glutamine 483 each coordinate Ca(2+).

This sequence belongs to the venom metalloproteinase (M12B) family. P-III subfamily. P-IIId sub-subfamily. Heterotrimer; disulfide-linked. The heterotrimer consists of 1 heavy chain and 2 light chains (lectins): LC1 and LC2. Zn(2+) serves as cofactor. Post-translationally, N-glycosylated; probably required for conformation. Removal of easily accessible sugars does not change its functional capacity, but removal of the core sugars with N-glycanase causes a virtually complete loss of enzyme activity, apparently as a result of major conformational changes in the molecule. Not O-glycosylated. As to expression, expressed by the venom gland.

The protein resides in the secreted. It catalyses the reaction Specifically activates several components of the blood clotting system, including coagulation factor X, coagulation factor IX and protein C by cleavage of Arg-|-Xaa bonds. Has no action on insulin B chain.. In terms of biological role, catalytic subunit of blood coagulation factor X-activating enzyme. Activates coagulation factor X (F10) by cleaving the Arg-Ile bond and is also able to activate coagulation factor IX (F9) and protein S (PROS1) by specific cleavage of Arg-Ile and Arg-Val bonds. This Daboia siamensis (Eastern Russel's viper) protein is Coagulation factor X-activating enzyme heavy chain.